The primary structure comprises 56 residues: MRDVIKLVSSAGTGHCYYTTKNKRTMTEKMQMKKYDPIARKHVIFTEGKISKGGGK.

This sequence belongs to the bacterial ribosomal protein bL33 family.

This chain is Large ribosomal subunit protein bL33C, found in Sorangium cellulosum (strain So ce56) (Polyangium cellulosum (strain So ce56)).